A 266-amino-acid polypeptide reads, in one-letter code: BTB/POZ domain-containing protein KCTD2 (266 aa).

Position 2 is an N-acetylalanine (alanine 2). The interval 38–79 (GRHPADTAASPPPPRTAGARARTSGADGRRRGRPLGPAQRGR) is disordered. Over residues 53 to 63 (TAGARARTSGA) the composition is skewed to low complexity. A BTB domain is found at 76-174 (QRGRYLLRDT…LVKERIRDNE (99 aa)).

The sequence is that of BTB/POZ domain-containing protein KCTD2 (Kctd2) from Mus musculus (Mouse).